The following is a 362-amino-acid chain: UDP-N-acetylglucosamine--N-acetylmuramyl-(pentapeptide) pyrophosphoryl-undecaprenol N-acetylglucosamine transferase (362 aa).

Residues Arg166, Ser196, and Gln290 each coordinate UDP-N-acetyl-alpha-D-glucosamine.

It belongs to the glycosyltransferase 28 family. MurG subfamily.

Its subcellular location is the cell membrane. It carries out the reaction Mur2Ac(oyl-L-Ala-gamma-D-Glu-L-Lys-D-Ala-D-Ala)-di-trans,octa-cis-undecaprenyl diphosphate + UDP-N-acetyl-alpha-D-glucosamine = beta-D-GlcNAc-(1-&gt;4)-Mur2Ac(oyl-L-Ala-gamma-D-Glu-L-Lys-D-Ala-D-Ala)-di-trans,octa-cis-undecaprenyl diphosphate + UDP + H(+). It participates in cell wall biogenesis; peptidoglycan biosynthesis. In terms of biological role, cell wall formation. Catalyzes the transfer of a GlcNAc subunit on undecaprenyl-pyrophosphoryl-MurNAc-pentapeptide (lipid intermediate I) to form undecaprenyl-pyrophosphoryl-MurNAc-(pentapeptide)GlcNAc (lipid intermediate II). This is UDP-N-acetylglucosamine--N-acetylmuramyl-(pentapeptide) pyrophosphoryl-undecaprenol N-acetylglucosamine transferase from Staphylococcus carnosus (strain TM300).